A 688-amino-acid chain; its full sequence is PTS system glucoside-specific EIICBA component (688 aa).

One can recognise a PTS EIIC type-1 domain in the interval 3–427 (KKLFGQLQRI…FKLKTPGRED (425 aa)). A run of 10 helical transmembrane segments spans residues 12–32 (IGKA…LLAF), 81–101 (LGLA…YLIM), 137–157 (LVLG…MGAL), 182–202 (FVPI…SFAW), 223–243 (LTTF…LHHI), 284–304 (AFTT…AFAI), 315–335 (IVGG…ITEP), 340–360 (FLFV…TSFL), 364–384 (LLGV…ILYG), and 395–415 (LVIP…DFAI). A PTS EIIB type-1 domain is found at 438 to 519 (AKLPFDVLDA…AKIMSGEITK (82 aa)). C460 acts as the Phosphocysteine intermediate; for EIIB activity in catalysis. The region spanning 560 to 664 (DQVFAGKMMG…SIVTPMIITN (105 aa)) is the PTS EIIA type-1 domain. The active-site Tele-phosphohistidine intermediate; for EIIA activity is H612.

Its subcellular location is the cell membrane. Its function is as follows. The phosphoenolpyruvate-dependent sugar phosphotransferase system (sugar PTS), a major carbohydrate active -transport system, catalyzes the phosphorylation of incoming sugar substrates concomitantly with their translocation across the cell membrane. This system is involved in alpha- and beta-glucoside transport. This chain is PTS system glucoside-specific EIICBA component (glcB), found in Staphylococcus aureus (strain MRSA252).